We begin with the raw amino-acid sequence, 407 residues long: Tryptophan synthase beta chain (407 aa).

Position 91 is an N6-(pyridoxal phosphate)lysine (Lys-91).

The protein belongs to the TrpB family. Tetramer of two alpha and two beta chains. It depends on pyridoxal 5'-phosphate as a cofactor.

The enzyme catalyses (1S,2R)-1-C-(indol-3-yl)glycerol 3-phosphate + L-serine = D-glyceraldehyde 3-phosphate + L-tryptophan + H2O. It functions in the pathway amino-acid biosynthesis; L-tryptophan biosynthesis; L-tryptophan from chorismate: step 5/5. Functionally, the beta subunit is responsible for the synthesis of L-tryptophan from indole and L-serine. This chain is Tryptophan synthase beta chain, found in Streptococcus pneumoniae (strain Taiwan19F-14).